Reading from the N-terminus, the 662-residue chain is Acetyl-coenzyme A synthetase (662 aa).

CoA-binding positions include 197 to 200 (RKGK) and Thr-317. ATP is bound by residues 393 to 395 (GEP), 417 to 422 (DTWWQT), Asp-510, and Arg-525. Ser-533 contributes to the CoA binding site. Arg-536 is an ATP binding site. Residues His-549 and Val-552 each coordinate Mg(2+). At Lys-623 the chain carries N6-acetyllysine.

Belongs to the ATP-dependent AMP-binding enzyme family. The cofactor is Mg(2+). Acetylated. Deacetylation by the SIR2-homolog deacetylase activates the enzyme.

The catalysed reaction is acetate + ATP + CoA = acetyl-CoA + AMP + diphosphate. Catalyzes the conversion of acetate into acetyl-CoA (AcCoA), an essential intermediate at the junction of anabolic and catabolic pathways. AcsA undergoes a two-step reaction. In the first half reaction, AcsA combines acetate with ATP to form acetyl-adenylate (AcAMP) intermediate. In the second half reaction, it can then transfer the acetyl group from AcAMP to the sulfhydryl group of CoA, forming the product AcCoA. The chain is Acetyl-coenzyme A synthetase from Helicobacter acinonychis (strain Sheeba).